The following is a 172-amino-acid chain: MEYFNVGKIVNTQGLQGEMRVLSVSDFAEERFKKGSQLALFDDKDRFVQEVTIVSHRKQKHFDIIKFKDMYHINAIEKYKGYTLKVSKDNQGDLQEGEFYYHQIIGMAVYEKDVLIGHVKEILQPGANDVWIVKRQGKRDLLLPYIPPVVLNVDVPNKRVDVELMEGLDDED.

The PRC barrel domain maps to E96 to L168.

It belongs to the RimM family. In terms of assembly, binds ribosomal protein uS19.

The protein localises to the cytoplasm. An accessory protein needed during the final step in the assembly of 30S ribosomal subunit, possibly for assembly of the head region. Essential for efficient processing of 16S rRNA. May be needed both before and after RbfA during the maturation of 16S rRNA. It has affinity for free ribosomal 30S subunits but not for 70S ribosomes. This is Ribosome maturation factor RimM from Streptococcus pyogenes serotype M1.